The following is a 119-amino-acid chain: Large ribosomal subunit protein uL22 (119 aa).

The protein belongs to the universal ribosomal protein uL22 family. As to quaternary structure, part of the 50S ribosomal subunit.

This protein binds specifically to 23S rRNA; its binding is stimulated by other ribosomal proteins, e.g. L4, L17, and L20. It is important during the early stages of 50S assembly. It makes multiple contacts with different domains of the 23S rRNA in the assembled 50S subunit and ribosome. Functionally, the globular domain of the protein is located near the polypeptide exit tunnel on the outside of the subunit, while an extended beta-hairpin is found that lines the wall of the exit tunnel in the center of the 70S ribosome. This chain is Large ribosomal subunit protein uL22, found in Trichodesmium erythraeum (strain IMS101).